An 80-amino-acid chain; its full sequence is Exodeoxyribonuclease 7 small subunit (80 aa).

Belongs to the XseB family. Heterooligomer composed of large and small subunits.

It localises to the cytoplasm. It carries out the reaction Exonucleolytic cleavage in either 5'- to 3'- or 3'- to 5'-direction to yield nucleoside 5'-phosphates.. Bidirectionally degrades single-stranded DNA into large acid-insoluble oligonucleotides, which are then degraded further into small acid-soluble oligonucleotides. This chain is Exodeoxyribonuclease 7 small subunit, found in Rickettsia conorii (strain ATCC VR-613 / Malish 7).